The sequence spans 237 residues: Sugar fermentation stimulation protein homolog (237 aa).

Belongs to the SfsA family.

This chain is Sugar fermentation stimulation protein homolog, found in Synechocystis sp. (strain ATCC 27184 / PCC 6803 / Kazusa).